A 691-amino-acid polypeptide reads, in one-letter code: Hormonally up-regulated neu tumor-associated kinase homolog A (691 aa).

The 259-residue stretch at 55-313 (YLIGRKLGEG…IQQALANRWL (259 aa)) folds into the Protein kinase domain. ATP is bound by residues 61–69 (LGEGSFAKV) and Lys84. The active-site Proton acceptor is the Asp179. Residues 406–425 (MNKNSYEERRSKDLEKRGEP) are compositionally biased toward basic and acidic residues. 4 disordered regions span residues 406–475 (MNKN…GGLS), 499–518 (QSPDPRTPKIMRRQDSHSQE), 580–640 (FQFD…SRGR), and 655–679 (QVVSPKGEKPLETRMPPLHQMSPGY). The segment covering 440–453 (SHRQNACLTPQGHS) has biased composition (polar residues). The span at 457 to 470 (PVKERRSSKSERES) shows a compositional bias: basic and acidic residues. Over residues 582 to 597 (FDNTSPSKSHFNQASF) the composition is skewed to polar residues. A compositionally biased stretch (low complexity) spans 604 to 620 (SPSSPESMSPTSPHSPS). Residues 621-631 (CNNNISGNLGS) show a composition bias toward polar residues.

It belongs to the protein kinase superfamily. CAMK Ser/Thr protein kinase family. SNF1 subfamily.

The catalysed reaction is L-seryl-[protein] + ATP = O-phospho-L-seryl-[protein] + ADP + H(+). It catalyses the reaction L-threonyl-[protein] + ATP = O-phospho-L-threonyl-[protein] + ADP + H(+). This is Hormonally up-regulated neu tumor-associated kinase homolog A (hunk-a) from Xenopus laevis (African clawed frog).